The sequence spans 204 residues: MIGILDYGVGNLKAFANVLKGLNFHHQIVKTEQELKGCEKIIMPGVGSFDSVMNKLIESGIRDVLSDLIINKKIPILGVCVGMQILASSSEEGSKSGLGWIRGRVKKFNFDRSDFSLTIPQIGWNEVNSTKENTLLKNLEKNPRFYFLHSYYIECEDKKDVIAIANYGGDFTCAVNRENIYGTQFHPEKSHHNGVALIRNFASL.

The region spanning 1-204 (MIGILDYGVG…VALIRNFASL (204 aa)) is the Glutamine amidotransferase type-1 domain. Cys80 acts as the Nucleophile in catalysis. Residues His186 and Glu188 contribute to the active site.

As to quaternary structure, heterodimer of HisH and HisF.

Its subcellular location is the cytoplasm. The enzyme catalyses 5-[(5-phospho-1-deoxy-D-ribulos-1-ylimino)methylamino]-1-(5-phospho-beta-D-ribosyl)imidazole-4-carboxamide + L-glutamine = D-erythro-1-(imidazol-4-yl)glycerol 3-phosphate + 5-amino-1-(5-phospho-beta-D-ribosyl)imidazole-4-carboxamide + L-glutamate + H(+). It carries out the reaction L-glutamine + H2O = L-glutamate + NH4(+). It functions in the pathway amino-acid biosynthesis; L-histidine biosynthesis; L-histidine from 5-phospho-alpha-D-ribose 1-diphosphate: step 5/9. Its function is as follows. IGPS catalyzes the conversion of PRFAR and glutamine to IGP, AICAR and glutamate. The HisH subunit catalyzes the hydrolysis of glutamine to glutamate and ammonia as part of the synthesis of IGP and AICAR. The resulting ammonia molecule is channeled to the active site of HisF. This chain is Imidazole glycerol phosphate synthase subunit HisH (hisH), found in Leptospira borgpetersenii.